The following is a 256-amino-acid chain: Thiazole synthase (256 aa).

Lysine 96 acts as the Schiff-base intermediate with DXP in catalysis. 1-deoxy-D-xylulose 5-phosphate is bound by residues glycine 157, 183–184, and 205–206; these read AG and NT.

Belongs to the ThiG family. Homotetramer. Forms heterodimers with either ThiH or ThiS.

Its subcellular location is the cytoplasm. It catalyses the reaction [ThiS sulfur-carrier protein]-C-terminal-Gly-aminoethanethioate + 2-iminoacetate + 1-deoxy-D-xylulose 5-phosphate = [ThiS sulfur-carrier protein]-C-terminal Gly-Gly + 2-[(2R,5Z)-2-carboxy-4-methylthiazol-5(2H)-ylidene]ethyl phosphate + 2 H2O + H(+). The protein operates within cofactor biosynthesis; thiamine diphosphate biosynthesis. Functionally, catalyzes the rearrangement of 1-deoxy-D-xylulose 5-phosphate (DXP) to produce the thiazole phosphate moiety of thiamine. Sulfur is provided by the thiocarboxylate moiety of the carrier protein ThiS. In vitro, sulfur can be provided by H(2)S. The sequence is that of Thiazole synthase from Clostridium beijerinckii (strain ATCC 51743 / NCIMB 8052) (Clostridium acetobutylicum).